Consider the following 1328-residue polypeptide: WASH complex subunit 2 (1328 aa).

Residues 1-219 (MNRTSPDSEQ…VGSDRGSIVD (219 aa)) are sufficient for interaction with WASHC3, WASHC4 and WASHC5; required for interaction with WASHC1. Phosphoserine is present on residues serine 157, serine 159, serine 204, serine 205, and serine 209. Over residues 201-213 (GELSSEEGSVGSD) the composition is skewed to low complexity. Disordered regions lie at residues 201 to 655 (GELS…KTNL) and 675 to 830 (KKTQ…PKST). Acidic residues-rich tracts occupy residues 219–231 (DSED…ESDD) and 248–273 (SDEE…EDIE). At serine 283 the chain carries Phosphoserine. The segment covering 288-323 (LAARIKGDVSNQRKEGHTDGKPQRTVKEKKERRTPA) has biased composition (basic and acidic residues). Threonine 321 carries the phosphothreonine modification. The segment at 346 to 592 (SRGGLFSDRQ…QTSSLPPQSQ (247 aa)) is sufficient for interaction with CCDC93. The segment at 347 to 1328 (RGGLFSDRQG…DDPLNAFGSQ (982 aa)) is interaction with VPS35. Positions 357–367 (LFDDDDESDLF) match the LFa 1 motif. Phosphoserine is present on residues serine 384 and serine 387. 2 short sequence motifs (LFa) span residues 440-455 (LFDD…DNFF) and 474-483 (IFDDDEGDLF). Positions 441 to 453 (FDDDDNDSDEDDN) are enriched in acidic residues. A compositionally biased stretch (polar residues) spans 508 to 528 (TITLPSSKNPKLVSETKTQKG). 2 short sequence motifs (LFa) span residues 529-540 (LFSDEEDSEDLF) and 564-575 (LFGDEDEEDNLF). Residues serine 531 and serine 536 each carry the phosphoserine modification. The span at 539–556 (LFSSQSSSKTKSASVLSS) shows a compositional bias: low complexity. Residues 582–592 (KQTSSLPPQSQ) are compositionally biased toward polar residues. Phosphoserine is present on residues serine 610 and serine 611. Residues 627–638 (ASERKSKGERWD) show a composition bias toward basic and acidic residues. 2 consecutive short sequence motifs (LFa) follow at residues 655–667 (LFEE…VDLF) and 683–695 (LFED…SSLF). Positions 690 to 699 (SGSSLFSLPP) are enriched in polar residues. Serine 720, serine 744, serine 749, serine 780, and serine 795 each carry phosphoserine. The segment covering 797-808 (FDEDEDKVEDDS) has biased composition (acidic residues). Short sequence motifs (LFa) lie at residues 832-840 (VFQDEELLF) and 849-855 (DPDVDLF). 2 disordered regions span residues 863–940 (LSMP…EPSS) and 991–1088 (PTLP…AMAV). A phosphoserine mark is found at serine 867 and serine 870. The LFa 10 motif lies at 871 to 881 (LFGDDDDDDLF). The span at 894–919 (PEKKGTLRKDHKPPELTEGSKEKSTW) shows a compositional bias: basic and acidic residues. The tract at residues 925–1328 (QDSSGLTPFK…DDPLNAFGSQ (404 aa)) is interaction with phospholipids. Basic residues predominate over residues 1016–1034 (NKGRVKVRGKRRPQTRAAR). Positions 1017 to 1035 (KGRVKVRGKRRPQTRAARR) are required for interaction with F-actin-capping protein subunit alpha (CAPZA1 or CAPZA2 or CAPZA3). Phosphoserine occurs at positions 1042, 1060, 1077, and 1102. The tract at residues 1115-1210 (AHLFDSGDIF…KKNQWKSDSH (96 aa)) is disordered. 3 short sequence motifs (LFa) span residues 1117-1124 (LFDSGDIF), 1157-1171 (VFPD…DDLF), and 1187-1195 (LLEDEEDLF). Residues serine 1162 and serine 1165 each carry the phosphoserine modification. Over residues 1196 to 1210 (ADQKGKKNQWKSDSH) the composition is skewed to basic and acidic residues. 3 consecutive short sequence motifs (LFa) follow at residues 1220–1226 (IFEDDIF), 1249–1257 (LFDDNIDIF), and 1277–1286 (MFDDDTDDIF). A disordered region spans residues 1289–1310 (GLQAKASKPKSQSAEAVSELRS). Residues 1317 to 1325 (IFDDPLNAF) carry the LFa 17 motif. Phosphoserine is present on serine 1327.

Belongs to the FAM21 family. In terms of assembly, component of the WASH core complex also described as WASH regulatory complex (SHRC) composed of WASHC1, WASHC2, WASHC3, WASHC4 and WASHC5; in the complex interacts (via N-terminus) directly with WASHC1. The WASH core complex associates with the F-actin-capping protein dimer (formed by CAPZA1, CAPZA2 or CAPZA3 and CAPZB) in a transient or substoichiometric manner which was initially described as WASH complex. Interacts with VPS35; mediates the association with the retromer CSC complex. Interacts with FKBP15. Interacts with CCDC93, CCDC22, VPS35L; indicative for an association of the WASH core complex with the CCC and retriever complexes. Directly interacts with TBC1D23.

It is found in the early endosome membrane. The protein localises to the cell membrane. Acts as a component of the WASH core complex that functions as a nucleation-promoting factor (NPF) at the surface of endosomes, where it recruits and activates the Arp2/3 complex to induce actin polymerization, playing a key role in the fission of tubules that serve as transport intermediates during endosome sorting. Mediates the recruitment of the WASH core complex to endosome membranes via binding to phospholipids and VPS35 of the retromer CSC. Mediates the recruitment of the F-actin-capping protein dimer to the WASH core complex probably promoting localized F-actin polymerization needed for vesicle scission. Via its C-terminus binds various phospholipids, most strongly phosphatidylinositol 4-phosphate (PtdIns-(4)P), phosphatidylinositol 5-phosphate (PtdIns-(5)P) and phosphatidylinositol 3,5-bisphosphate (PtdIns-(3,5)P2). Involved in the endosome-to-plasma membrane trafficking and recycling of SNX27-retromer-dependent cargo proteins, such as GLUT1. Required for the association of DNAJC13, ENTR1, ANKRD50 with retromer CSC subunit VPS35. Required for the endosomal recruitment of CCC and retriever complexes subunits COMMD1 and CCDC93 as well as the retrievere complex subunit VPS35L. This chain is WASH complex subunit 2, found in Rattus norvegicus (Rat).